The primary structure comprises 286 residues: 4-diphosphocytidyl-2-C-methyl-D-erythritol kinase (286 aa).

Lys13 is a catalytic residue. 101–111 (PQGAGLGGGSS) is an ATP binding site. Asp143 is an active-site residue.

The protein belongs to the GHMP kinase family. IspE subfamily.

It carries out the reaction 4-CDP-2-C-methyl-D-erythritol + ATP = 4-CDP-2-C-methyl-D-erythritol 2-phosphate + ADP + H(+). Its pathway is isoprenoid biosynthesis; isopentenyl diphosphate biosynthesis via DXP pathway; isopentenyl diphosphate from 1-deoxy-D-xylulose 5-phosphate: step 3/6. Functionally, catalyzes the phosphorylation of the position 2 hydroxy group of 4-diphosphocytidyl-2C-methyl-D-erythritol. This chain is 4-diphosphocytidyl-2-C-methyl-D-erythritol kinase, found in Idiomarina loihiensis (strain ATCC BAA-735 / DSM 15497 / L2-TR).